The sequence spans 203 residues: Thymidylate kinase (203 aa).

10 to 17 (GIDGAGKS) contributes to the ATP binding site.

It belongs to the thymidylate kinase family.

It carries out the reaction dTMP + ATP = dTDP + ADP. Phosphorylation of dTMP to form dTDP in both de novo and salvage pathways of dTTP synthesis. The polypeptide is Thymidylate kinase (Cupriavidus pinatubonensis (strain JMP 134 / LMG 1197) (Cupriavidus necator (strain JMP 134))).